A 450-amino-acid polypeptide reads, in one-letter code: Bifunctional protein GlmU (450 aa).

Positions 1-229 are pyrophosphorylase; sequence MRRHAIILAA…VEEIMGVNDR (229 aa). UDP-N-acetyl-alpha-D-glucosamine contacts are provided by residues 8–11, K22, Q72, and 77–78; these read LAAG and GT. D102 lines the Mg(2+) pocket. 3 residues coordinate UDP-N-acetyl-alpha-D-glucosamine: G139, E154, and N227. N227 contributes to the Mg(2+) binding site. The linker stretch occupies residues 230-250; that stretch reads VMLSQAEKAMQRRTNHYHMLN. The N-acetyltransferase stretch occupies residues 251 to 450; sequence GVTIIDPDST…RQTTKEGYRK (200 aa). Residues R332 and K350 each contribute to the UDP-N-acetyl-alpha-D-glucosamine site. Residue H362 is the Proton acceptor of the active site. UDP-N-acetyl-alpha-D-glucosamine-binding residues include Y365 and N376. Acetyl-CoA contacts are provided by residues 385–386, A422, and R439; that span reads NY.

The protein in the N-terminal section; belongs to the N-acetylglucosamine-1-phosphate uridyltransferase family. It in the C-terminal section; belongs to the transferase hexapeptide repeat family. As to quaternary structure, homotrimer. The cofactor is Mg(2+).

It is found in the cytoplasm. It carries out the reaction alpha-D-glucosamine 1-phosphate + acetyl-CoA = N-acetyl-alpha-D-glucosamine 1-phosphate + CoA + H(+). The enzyme catalyses N-acetyl-alpha-D-glucosamine 1-phosphate + UTP + H(+) = UDP-N-acetyl-alpha-D-glucosamine + diphosphate. It participates in nucleotide-sugar biosynthesis; UDP-N-acetyl-alpha-D-glucosamine biosynthesis; N-acetyl-alpha-D-glucosamine 1-phosphate from alpha-D-glucosamine 6-phosphate (route II): step 2/2. Its pathway is nucleotide-sugar biosynthesis; UDP-N-acetyl-alpha-D-glucosamine biosynthesis; UDP-N-acetyl-alpha-D-glucosamine from N-acetyl-alpha-D-glucosamine 1-phosphate: step 1/1. The protein operates within bacterial outer membrane biogenesis; LPS lipid A biosynthesis. Functionally, catalyzes the last two sequential reactions in the de novo biosynthetic pathway for UDP-N-acetylglucosamine (UDP-GlcNAc). The C-terminal domain catalyzes the transfer of acetyl group from acetyl coenzyme A to glucosamine-1-phosphate (GlcN-1-P) to produce N-acetylglucosamine-1-phosphate (GlcNAc-1-P), which is converted into UDP-GlcNAc by the transfer of uridine 5-monophosphate (from uridine 5-triphosphate), a reaction catalyzed by the N-terminal domain. This chain is Bifunctional protein GlmU, found in Staphylococcus aureus (strain NCTC 8325 / PS 47).